A 102-amino-acid chain; its full sequence is Small ribosomal subunit protein uS10 (102 aa).

This sequence belongs to the universal ribosomal protein uS10 family. Part of the 30S ribosomal subunit.

Functionally, involved in the binding of tRNA to the ribosomes. This is Small ribosomal subunit protein uS10 from Acidothermus cellulolyticus (strain ATCC 43068 / DSM 8971 / 11B).